The following is a 428-amino-acid chain: Putative oxidoreductase YteT (428 aa).

Residues 1-23 (MKNIVFCGLSSRAFSMFIKPLME) form the signal peptide.

This sequence belongs to the Gfo/Idh/MocA family.

Its function is as follows. May play a role in the degradation of type I rhamnogalacturonan derived from plant cell walls. The protein is Putative oxidoreductase YteT (yteT) of Bacillus subtilis (strain 168).